Reading from the N-terminus, the 905-residue chain is Phosphatidylethanolamine N-methyltransferase (905 aa).

Polar residues-rich tracts occupy residues 1-22 (MTNQ…STSV) and 40-58 (DSNG…SSLN). Residues 1-73 (MTNQIPSASS…SEPERYGCTP (73 aa)) form a disordered region. Residues 1-104 (MTNQIPSASS…DPRFSKTPWD (104 aa)) are Lumenal-facing. Residues 105-125 (WIVISSILAQVLLFFMTTGAV) form a helical membrane-spanning segment. Topologically, residues 126–128 (RRY) are cytoplasmic. The helical transmembrane segment at 129-149 (SMMLCFFFWRISYDAGIGFLL) threads the bilayer. Topologically, residues 150 to 209 (HMQSNHRKVVTWISDFGFFDKENHPKLYDLTKKQLISKMDSSYNYDTSPLEFNSWLVFRH) are lumenal. The helical transmembrane segment at 210-230 (FVDLILMCDFCSYILMGLAWT) threads the bilayer. At 231–236 (CWPKVN) the chain is on the cytoplasmic side. The helical transmembrane segment at 237–257 (IILQFLRIFGGIALIVFNYWV) threads the bilayer. The Lumenal segment spans residues 258-268 (KMDAHRVVRDY). The chain crosses the membrane as a helical span at residues 269–289 (AWYWGDFFFLLRSSLVFNGVF). Topologically, residues 290 to 313 (ELAPHPMYSVGYAGYYGMSLLTGS) are cytoplasmic. A helical transmembrane segment spans residues 314–334 (YAVLFASILAHAAQFGFLLFV). Residues 335 to 379 (ENPHIERTYGTDINHARLSPRGEDNEFELPPEHDLVGFVNFDFTR) lie on the Lumenal side of the membrane. At S353 the chain carries Phosphoserine. The helical transmembrane segment at 380–400 (ISDVALLIIALYSIFIILLSS) threads the bilayer. Over 401–408 (NSHYSQFW) the chain is Cytoplasmic. A helical membrane pass occupies residues 409-429 (AIFQAFVWRFLHSIIHAFILF). Topologically, residues 430–456 (YQSKSKAWTKHFIRNGESAAYAWSQWK) are lumenal. Residues 457–479 (GLYNLTLNMSYISFVMAAWKLYH) form a helical membrane-spanning segment. Residues 480-493 (LPSNWTYGLVSLRH) are Cytoplasmic-facing. The helical transmembrane segment at 494–514 (ALGFGLIALHIYTSVSIYEDL) threads the bilayer. Residues 515–552 (GQYGWFYGDFFLPSRSPKLVYQGIYRYVNNPERFLGCS) lie on the Lumenal side of the membrane. A helical membrane pass occupies residues 553–573 (AYWGLALISSSAWIFLIAILA). Residues 574-905 (QLSNLAIIRL…FDGPSGAKDD (332 aa)) are Cytoplasmic-facing.

Belongs to the class VI-like SAM-binding methyltransferase superfamily. CHO2 family.

The protein localises to the endoplasmic reticulum membrane. The catalysed reaction is a 1,2-diacyl-sn-glycero-3-phosphoethanolamine + S-adenosyl-L-methionine = a 1,2-diacyl-sn-glycero-3-phospho-N-methylethanolamine + S-adenosyl-L-homocysteine + H(+). Its pathway is phospholipid metabolism; phosphatidylcholine biosynthesis. In terms of biological role, catalyzes the first step of the methylation pathway of phosphatidylcholine biosynthesis, the SAM-dependent methylation of phosphatidylethanolamine (PE) to phosphatidylmonomethylethanolamine (PMME). The chain is Phosphatidylethanolamine N-methyltransferase from Schizosaccharomyces pombe (strain 972 / ATCC 24843) (Fission yeast).